A 252-amino-acid chain; its full sequence is Carboxy-S-adenosyl-L-methionine synthase (252 aa).

Residues Tyr45, 70-72 (GCS), 95-96 (DN), 127-128 (DI), Asn142, and Arg209 contribute to the S-adenosyl-L-methionine site.

This sequence belongs to the class I-like SAM-binding methyltransferase superfamily. Cx-SAM synthase family. As to quaternary structure, homodimer.

The catalysed reaction is prephenate + S-adenosyl-L-methionine = carboxy-S-adenosyl-L-methionine + 3-phenylpyruvate + H2O. Catalyzes the conversion of S-adenosyl-L-methionine (SAM) to carboxy-S-adenosyl-L-methionine (Cx-SAM). This chain is Carboxy-S-adenosyl-L-methionine synthase, found in Pseudomonas paraeruginosa (strain DSM 24068 / PA7) (Pseudomonas aeruginosa (strain PA7)).